We begin with the raw amino-acid sequence, 400 residues long: General L-amino acid transport system permease protein AapQ (400 aa).

8 helical membrane passes run 29-49 (SIFY…WVAH), 100-120 (LLVA…IGIG), 142-162 (IPPL…LPQP), 188-208 (TGMI…IIIA), 225-245 (VWTA…VSGF), 264-284 (VVGP…ASFI), 340-360 (NSSL…GTIL), and 367-387 (IEIV…TSLF). The region spanning 96–388 (ILNTLLVAVT…SLSILTSLFM (293 aa)) is the ABC transmembrane type-1 domain.

Belongs to the binding-protein-dependent transport system permease family. HisMQ subfamily.

It is found in the cell inner membrane. Functionally, part of a binding-protein-dependent transport system for L-amino acids, affects the uptake as well as efflux of these amino acids. Probably responsible for the translocation of the substrate across the membrane. The polypeptide is General L-amino acid transport system permease protein AapQ (aapQ) (Rhizobium johnstonii (strain DSM 114642 / LMG 32736 / 3841) (Rhizobium leguminosarum bv. viciae)).